Consider the following 123-residue polypeptide: Sperm-associated antigen 11A (123 aa).

The first 25 residues, 1-25, serve as a signal peptide directing secretion; the sequence is MRQRLLPSVTSLLLVALLFPGSSQA. N-linked (GlcNAc...) asparagine glycosylation is present at N29.

This sequence belongs to the SPAG11 family.

It localises to the secreted. Has antimicrobial activity against E.coli. Plays a role in the defense response in the male reproductive tract, contributing to sperm maturation, storage and protection. The protein is Sperm-associated antigen 11A of Homo sapiens (Human).